Here is a 1237-residue protein sequence, read N- to C-terminus: MSSAPRRPASGADSFRTPEPESLGPGTPGFPEQEEDELHRTLGVERFEEILQEAGSRGGEEPGRSYGEEDFEYHRQSSHHIHHPLSTHLPPDARRRKTPQGPGRKPRRRPGASPTGATPTIEEGEEDEEEANEAEGARAPTEPSPASTPSSVQFFLQEDEGAERKAERTSPSPPTLLPHQEAAPWATEGAQTGVPVEEVAVVASGTAGGDNGGASGRPLTKAQPGHRSYNLQERRRIGSMTGAEQALLPRVPTDESEAQTLATADLDLMKSHRFEDVPGVRRHLVRKNAKGSAQSSREGREPGPTPRSRPRAPHKPHEVFVELNELLLDKNQEPQWRETARWIKFEEDVEEETERWGKPHVASLSFRSLLELRRTLAHGAVLLDLDQQTLPGVAHQVVEQMVISDQIKAEDRANVLRALLLKHSHPSDEKDFSFPRNISAGSLGSLLGHHHGQGAESDPHVTEPLIGGIPETRLDVERERDVPPSAPPAGITRSKSKHELKLLEKIPENAEATVVLVGCVEFLSRPTMAFVRLREAVELDAVLEVPVPVRFLFLLLGPSSANMDYHEIGRSISTLMSDKQFHEAAYLADEREDLLTAINAFLDCSVVLPPSEVQGEELLRSVAHFQRQMLKKREEQGRLLPPGLGLEPKSAQDKALLQMVEAAGAAEDDPLRRTGRPFGGLIRDVRRRYPHYLSDFRDALDPQCVAAVIFIYFAALSPAITFGGLLGEKTQDLIGVSELIMSTALQGVIFCLLGAQPLLVIGFSGPLLVFEEAFFTFCSSNQLEYLVGRVWIGFWLVLLALLMVALEGSFLVRFVSRFTQEIFAFLISLIFIYETFYKLIKIFQEHPLHGCSVSNSSETDSSENATWAGAGSTLGPANRSSAGQAGQGRPRGQPNTALLSLVLMAGTFFIAFFLRKFKNSRFFPGRIRRVIGDFGVPIAILIMVLVDYSIEDTYTQKLSVPSGFSVTAPDKRGWVINPLGEKSPFPVWMMVASLLPAILVFILIFMETQITTLIISKKERMLQKGSGFHLDLLLIVAMGGICALFGLPWLAAATVRSVTHANALTVMSKAVAPGDKPKIQEVKEQRVTGLLVALLVGLSIVIGDLLRQIPLAVLFGIFLYMGVTSLNGIQFYERLHLLLMPPKHHPDVTYVKKVRTLRMHLFTALQLLCLALLWAVMSTAASLAFPFILILTVPLRMVVLTRIFTEREMKCLDANEAEPVFDEREGVDEYNEMPMPV.

A disordered region spans residues 1-237; it reads MSSAPRRPAS…SYNLQERRRI (237 aa). Residues 1–703 lie on the Cytoplasmic side of the membrane; that stretch reads MSSAPRRPAS…SDFRDALDPQ (703 aa). Basic and acidic residues-rich tracts occupy residues 37–49 and 58–75; these read ELHR…RFEE and GGEE…EYHR. Basic residues-rich tracts occupy residues 76-85 and 94-110; these read QSSHHIHHPL and RRRK…RRRP. A Phosphoserine modification is found at Ser-113. Over residues 122-133 the composition is skewed to acidic residues; the sequence is EEGEEDEEEANE. A compositionally biased stretch (low complexity) spans 137–151; it reads ARAPTEPSPASTPSS. Residues Ser-144, Ser-170, and Ser-172 each carry the phosphoserine modification. A compositionally biased stretch (gly residues) spans 206–215; the sequence is TAGGDNGGAS. At Ser-239 the chain carries Phosphoserine. Position 253 is a phosphothreonine (Thr-253). Lys-270 carries the post-translational modification N6-methyllysine. The interval 281-316 is disordered; the sequence is RRHLVRKNAKGSAQSSREGREPGPTPRSRPRAPHKP. Phosphoserine is present on Ser-439. The interval 445-464 is disordered; that stretch reads SLLGHHHGQGAESDPHVTEP. 4 consecutive transmembrane segments (helical) span residues 704–727, 733–770, 790–812, and 822–843; these read CVAA…GLLG, LIGV…LLVF, VWIG…SFLV, and IFAF…IKIF. The membrane (anion exchange) stretch occupies residues 704–1237; the sequence is CVAAVIFIYF…DEYNEMPMPV (534 aa). Topologically, residues 844–896 are extracellular; the sequence is QEHPLHGCSVSNSSETDSSENATWAGAGSTLGPANRSSAGQAGQGRPRGQPNT. N-linked (GlcNAc...) asparagine glycosylation is found at Asn-855, Asn-864, and Asn-878. A helical transmembrane segment spans residues 897 to 914; that stretch reads ALLSLVLMAGTFFIAFFL. Residues 915-929 lie on the Cytoplasmic side of the membrane; the sequence is RKFKNSRFFPGRIRR. Transmembrane regions (helical) follow at residues 930-950, 984-1006, 1032-1053, 1087-1132, and 1159-1195; these read VIGD…DYSI, PFPV…LIFM, LLLI…LAAA, VTGL…IQFY, and MHLF…TVPL. The S-palmitoyl cysteine moiety is linked to residue Cys-1169.

It belongs to the anion exchanger (TC 2.A.31) family. Expressed in the ileum (at protein level).

It is found in the cell membrane. It localises to the apical cell membrane. Its subcellular location is the basolateral cell membrane. It catalyses the reaction hydrogencarbonate(in) + chloride(out) = hydrogencarbonate(out) + chloride(in). Sodium-independent anion exchanger which mediates the electroneutral exchange of chloride for bicarbonate ions across the cell membrane. Plays an important role in osteoclast differentiation and function. Regulates bone resorption and calpain-dependent actin cytoskeleton organization in osteoclasts via anion exchange-dependent control of pH. Essential for intracellular pH regulation in CD8(+) T-cells upon CD3 stimulation, modulating CD8(+) T-cell response. In Oryctolagus cuniculus (Rabbit), this protein is Anion exchange protein 2 (SLC4A2).